A 1008-amino-acid chain; its full sequence is RNA cytidine acetyltransferase (1008 aa).

ATP-binding positions include 282–291 (GRGKSAALGL) and arginine 443. The region spanning 531–713 (CLLGPVQRMD…VPVYLSQKSN (183 aa)) is the N-acetyltransferase domain. Acetyl-CoA contacts are provided by residues 601–603 (VAT), 608–614 (QRMGYGK), and asparagine 700. A Phosphoserine modification is found at serine 907. Residues 950–1008 (ALETNGTGGGSGLLSVKSGVKRLDGPIETREDGDLAAPLSKKKKKNNPKQRRSQGKSLI) form a disordered region. Over residues 970–982 (KRLDGPIETREDG) the composition is skewed to basic and acidic residues. Basic residues predominate over residues 989 to 1008 (SKKKKKNNPKQRRSQGKSLI).

This sequence belongs to the RNA cytidine acetyltransferase family. NAT10 subfamily. Component of the PRC1 complex (PSC, PC, PH and dRING1) in 0-12 hours Drosophila embryos. This complex is distinct from the Esc/E(z) complex, which contains many other PcG proteins like Esc, E(z), Su(z)12, HDAC1/Rpd3, Caf1-55 and probably Pho. The two complexes however cooperate and interact together during the first 3 hours of development to establish PcG silencing. Part of the small subunit (SSU) processome, composed of more than 70 proteins and the RNA chaperone small nucleolar RNA (snoRNA) U3.

It is found in the nucleus. The protein resides in the nucleolus. The catalysed reaction is a cytidine in 18S rRNA + acetyl-CoA + ATP + H2O = an N(4)-acetylcytidine in 18S rRNA + ADP + phosphate + CoA + H(+). The enzyme catalyses a cytidine in tRNA + acetyl-CoA + ATP + H2O = an N(4)-acetylcytidine in tRNA + ADP + phosphate + CoA + H(+). RNA cytidine acetyltransferase with specificity toward both 18S rRNA and tRNAs. Catalyzes the formation of N(4)-acetylcytidine (ac4C) in 18S rRNA. Required for early nucleolar cleavages of precursor rRNA at sites A0, A1 and A2 during 18S rRNA synthesis. Catalyzes the formation of ac4C in serine and leucine tRNAs. Requires a tRNA-binding adapter protein for full tRNA acetyltransferase activity but not for 18S rRNA acetylation. Polycomb group (PcG) protein. PcG proteins act by forming multiprotein complexes, which are required to maintain the transcriptionally repressive state of homeotic genes throughout development. PcG proteins are not required to initiate repression, but to maintain it during later stages of development. They probably act via the methylation of histones, rendering chromatin heritably changed in its expressibility. Part of the small subunit (SSU) processome, first precursor of the small eukaryotic ribosomal subunit. During the assembly of the SSU processome in the nucleolus, many ribosome biogenesis factors, an RNA chaperone and ribosomal proteins associate with the nascent pre-rRNA and work in concert to generate RNA folding, modifications, rearrangements and cleavage as well as targeted degradation of pre-ribosomal RNA by the RNA exosome. The protein is RNA cytidine acetyltransferase (l(1)G0020) of Drosophila melanogaster (Fruit fly).